The primary structure comprises 37 residues: Large ribosomal subunit protein bL36 (37 aa).

Belongs to the bacterial ribosomal protein bL36 family.

In Mesomycoplasma hyopneumoniae (strain 7448) (Mycoplasma hyopneumoniae), this protein is Large ribosomal subunit protein bL36.